A 144-amino-acid chain; its full sequence is 3-dehydroquinate dehydratase (144 aa).

Tyrosine 22 acts as the Proton acceptor in catalysis. Substrate-binding residues include asparagine 74, histidine 80, and aspartate 87. Histidine 100 (proton donor) is an active-site residue. Substrate is bound by residues leucine 101–serine 102 and arginine 111.

It belongs to the type-II 3-dehydroquinase family. In terms of assembly, homododecamer.

It carries out the reaction 3-dehydroquinate = 3-dehydroshikimate + H2O. The protein operates within metabolic intermediate biosynthesis; chorismate biosynthesis; chorismate from D-erythrose 4-phosphate and phosphoenolpyruvate: step 3/7. Catalyzes a trans-dehydration via an enolate intermediate. The chain is 3-dehydroquinate dehydratase from Clostridium perfringens (strain ATCC 13124 / DSM 756 / JCM 1290 / NCIMB 6125 / NCTC 8237 / Type A).